We begin with the raw amino-acid sequence, 297 residues long: Phosphatidylinositol N-acetylglucosaminyltransferase subunit C (297 aa).

A run of 4 helical transmembrane segments spans residues 67–87 (VFVVIWWYMDEGLLAPQWLFG), 88–108 (TGLASSLIGYVLFDFIDGGEG), 153–173 (AVFMLLGHLIFFDYGANAAIV), and 239–259 (ALGGLLSISAVGAILFALLLI).

Belongs to the PIGC family. Component of the glycosylphosphatidylinositol-N-acetylglucosaminyltransferase (GPI-GnT) complex composed at least by PIGA, PIGC, PIGH, PIGP, PIGQ, PIGY and DPM2. Interacts with PIGQ. Interacts with the heterodimer PIGA:PIGH.

It localises to the endoplasmic reticulum membrane. It functions in the pathway glycolipid biosynthesis; glycosylphosphatidylinositol-anchor biosynthesis. Its function is as follows. Part of the glycosylphosphatidylinositol-N-acetylglucosaminyltransferase (GPI-GnT) complex that catalyzes the transfer of N-acetylglucosamine from UDP-N-acetylglucosamine to phosphatidylinositol and participates in the first step of GPI biosynthesis. The polypeptide is Phosphatidylinositol N-acetylglucosaminyltransferase subunit C (Bos taurus (Bovine)).